A 206-amino-acid chain; its full sequence is Pyridoxine/pyridoxamine 5'-phosphate oxidase (206 aa).

FMN-binding positions include 53–58 (RMVLLK), 68–69 (YT), Lys-75, and Gln-97. Residue Lys-58 coordinates substrate. Positions 115, 119, and 123 each coordinate substrate. Residues 132–133 (QS) and Trp-177 contribute to the FMN site. 183-185 (RLH) contributes to the substrate binding site. Position 187 (Arg-187) interacts with FMN.

This sequence belongs to the pyridoxamine 5'-phosphate oxidase family. As to quaternary structure, homodimer. Requires FMN as cofactor.

The catalysed reaction is pyridoxamine 5'-phosphate + O2 + H2O = pyridoxal 5'-phosphate + H2O2 + NH4(+). It catalyses the reaction pyridoxine 5'-phosphate + O2 = pyridoxal 5'-phosphate + H2O2. The protein operates within cofactor metabolism; pyridoxal 5'-phosphate salvage; pyridoxal 5'-phosphate from pyridoxamine 5'-phosphate: step 1/1. It participates in cofactor metabolism; pyridoxal 5'-phosphate salvage; pyridoxal 5'-phosphate from pyridoxine 5'-phosphate: step 1/1. Its function is as follows. Catalyzes the oxidation of either pyridoxine 5'-phosphate (PNP) or pyridoxamine 5'-phosphate (PMP) into pyridoxal 5'-phosphate (PLP). In Rhizobium etli (strain CIAT 652), this protein is Pyridoxine/pyridoxamine 5'-phosphate oxidase.